The following is a 185-amino-acid chain: uncharacterized protein (185 aa).

This is an uncharacterized protein from Bacillus subtilis (strain 168).